We begin with the raw amino-acid sequence, 238 residues long: MQWREMGVVMGTRPYGDEHLLLSILTRNRGLRRGLTRFTKKRPLQIGDLIDATWRAKLPTNLGHFTCEVIASAFYSYFRDRIKLMCLSSITHIMSTALPENEPHPTLYDSFQDFAAAAEAEAPWYNHYLKLELLVLSQLGFALDLSKCAVSNSKDNLLFISPKTGRALSEAVGCAYRDKLLPLPKVLRSISCGVETECCSADEFALSLRILGFFLRRHLLQESHTFQESRKILTGLLG.

The protein belongs to the RecO family.

Its function is as follows. Involved in DNA repair and RecF pathway recombination. The polypeptide is DNA repair protein RecO (Anaplasma marginale (strain St. Maries)).